A 219-amino-acid polypeptide reads, in one-letter code: MTQRGRAAKPTGPTGRPRRTGGQRGTDRVGRGGDLATRRARLHQVVEPVVQGAGYDLEDLSVSRAGRRHVVQVIVDADGGVDLDAVADVSRAVSAALDAAEEVGGDIVAGEYQLEVSSPGVARPLTLPRHWRRNTGRLVRFTVRGGPEAVDRQVTGRVVEADDERVVVETDAGRTEWRHAELGPGRVQVEFTRPGEPDAFDGTDEAGDFDDDDVEDEER.

Disordered regions lie at residues 1 to 38 (MTQRGRAAKPTGPTGRPRRTGGQRGTDRVGRGGDLATR) and 189 to 219 (VEFTRPGEPDAFDGTDEAGDFDDDDVEDEER). Residues 198-219 (DAFDGTDEAGDFDDDDVEDEER) show a composition bias toward acidic residues.

Belongs to the RimP family.

It localises to the cytoplasm. Its function is as follows. Required for maturation of 30S ribosomal subunits. This chain is Ribosome maturation factor RimP, found in Salinispora arenicola (strain CNS-205).